We begin with the raw amino-acid sequence, 362 residues long: Aspartate-semialdehyde dehydrogenase (362 aa).

NADP(+) is bound by residues T15, G16, A17, V18, S40, S43, L87, and D88. C154 acts as the Acyl-thioester intermediate in catalysis. G186 contacts NADP(+). The Proton acceptor role is filled by H251. N340 provides a ligand contact to NADP(+).

This sequence belongs to the aspartate-semialdehyde dehydrogenase family. As to quaternary structure, homotetramer; dimer of dimers.

It localises to the cytoplasm. Its subcellular location is the cytosol. The protein localises to the nucleus. The enzyme catalyses L-aspartate 4-semialdehyde + phosphate + NADP(+) = 4-phospho-L-aspartate + NADPH + H(+). It functions in the pathway amino-acid biosynthesis; L-methionine biosynthesis via de novo pathway; L-homoserine from L-aspartate: step 2/3. The protein operates within amino-acid biosynthesis; L-threonine biosynthesis; L-threonine from L-aspartate: step 2/5. Catalyzes the NADPH-dependent formation of L-aspartate 4-semialdehyde (L-ASA) by the reductive dephosphorylation of 4-phospho-L-aspartate. Mediates the second step in the biosynthesis of amino acids that derive from aspartate (the aspartate family of amino acids), including methioinine and threonine, the latter of which is a precursor to isoleucine. The polypeptide is Aspartate-semialdehyde dehydrogenase (Trichophyton rubrum (strain ATCC MYA-4607 / CBS 118892) (Athlete's foot fungus)).